Reading from the N-terminus, the 3414-residue chain is Genome polyprotein (3414 aa).

Residues 1–30 (MVKKAILKGKGGGPPRRVSKETATKTRQPR) are disordered. Residues 1–98 (MVKKAILKGK…LQKRGKRRSA (98 aa)) lie on the Cytoplasmic side of the membrane. A propeptide spans 97–117 (SATDWMSWLLVITLLGMTIAA) (ER anchor for the capsid protein C, removed in mature form by serine protease NS3). A helical membrane pass occupies residues 99 to 119 (TDWMSWLLVITLLGMTIAATV). Over 120–242 (RKERDGSTVI…HLTRVEGWVW (123 aa)) the chain is Extracellular. A glycan (N-linked (GlcNAc...) asparagine; by host) is linked at Asn144. Residues 243–260 (KNRLLALAMVTVVWLTLE) traverse the membrane as a helical segment. Ser261 is a topological domain (cytoplasmic). The chain crosses the membrane as a helical span at residues 262-280 (VVTRVAVLVVLLCLAPVYA). Residues 281–727 (SRCTHLENRD…HTVLGGAFNS (447 aa)) lie on the Extracellular side of the membrane. 6 cysteine pairs are disulfide-bonded: Cys283–Cys310, Cys340–Cys396, Cys340–Cys401, Cys354–Cys385, Cys372–Cys396, and Cys372–Cys401. The interval 378–391 (DRGWGNHCGLFGKG) is fusion peptide. N-linked (GlcNAc...) asparagine; by host glycosylation is present at Asn434. 2 cysteine pairs are disulfide-bonded: Cys466/Cys570 and Cys587/Cys618. Residues 728-748 (IFGGVGFLPKLLLGVALAWLG) form a helical membrane-spanning segment. Residues 749–755 (LNMRNPT) are Extracellular-facing. A helical transmembrane segment spans residues 756–776 (MSMSFLLAGVLVLAMTLGVGA). Over 777–1132 (DVGCAVDTER…RSMVVADNGE (356 aa)) the chain is Extracellular. 6 cysteine pairs are disulfide-bonded: Cys780/Cys791, Cys831/Cys920, Cys955/Cys1000, Cys1057/Cys1106, Cys1068/Cys1090, and Cys1089/Cys1093. N-linked (GlcNAc...) asparagine; by host glycosylation is found at Asn861, Asn983, and Asn999. A helical membrane pass occupies residues 1133 to 1153 (LLSEGGVPGIVALFVVLEYII). Topologically, residues 1154 to 1158 (RRRPS) are cytoplasmic. The chain crosses the membrane as a helical span at residues 1159–1179 (TGSTVVWGGIVVLALLVTGMV). The Lumenal portion of the chain corresponds to 1180–1187 (RMESLVRY). The chain crosses the membrane as a helical span at residues 1188-1208 (VVAVGITFHLELGPEIVALML). Residues 1209–1293 (LQAVFELRVG…LLMALMTQQD (85 aa)) are Cytoplasmic-facing. A helical transmembrane segment spans residues 1294-1314 (VVTVHHGLVCFLSAASACSIW). Topologically, residues 1315 to 1327 (RLLRGHREQKGLT) are lumenal. The helical transmembrane segment at 1328 to 1348 (WIVPLARLLGGEGSGIRLLAF) threads the bilayer. The Cytoplasmic portion of the chain corresponds to 1349 to 1359 (WELSAHRGRRS). A helical membrane pass occupies residues 1360 to 1377 (FSEPLTVVGVMLTLASGM). The Lumenal portion of the chain corresponds to 1378 to 1382 (MRHTS). Residues 1383 to 1403 (QEALCALAVASFLLLMLVLGT) traverse the membrane as a helical segment. Over 1404–1454 (RKMQLVAEWSGCVEWHPELVNEGGEVSLRVRQDAMGNFHLTELEKEERMMA) the chain is Cytoplasmic. Residues 1410 to 1449 (AEWSGCVEWHPELVNEGGEVSLRVRQDAMGNFHLTELEKE) form an interacts with and activates NS3 protease region. The helical intramembrane region spans 1455–1475 (FWLIAGLAASAIHWSGIIGVM). The Cytoplasmic segment spans residues 1476-2160 (GLWTLTKMLR…RMAERDAPEA (685 aa)). Positions 1490–1669 (SDLVFSGQGG…EAEKSRPNLP (180 aa)) constitute a Peptidase S7 domain. Catalysis depends on charge relay system; for serine protease NS3 activity residues His1543, Asp1567, and Ser1627. In terms of domain architecture, Helicase ATP-binding spans 1675-1831 (TGWTSKGQIT…ESNGAITSEE (157 aa)). 1688-1695 (MHPGSGKT) provides a ligand contact to ATP. The short motif at 1779–1782 (DEAH) is the DEAH box element. The 160-residue stretch at 1841-2000 (DGFDWITEYE…TLRGPVATFY (160 aa)) folds into the Helicase C-terminal domain. N6-acetyllysine; by host is present on Lys1883. The chain crosses the membrane as a helical span at residues 2161-2181 (FLTMVEMMVLGLATLGVIWCF). The Lumenal segment spans residues 2182-2189 (VVRTSISR). The segment at residues 2190–2210 (MMLGTLVLLASLLLLWAGGVG) is an intramembrane region (helical). Tyr2211 is a topological domain (lumenal). Residues 2212 to 2232 (GNMAGVALIFYTLLTVLQPEA) form a helical membrane-spanning segment. Residues 2233-2244 (GKQRSSDDNKLA) lie on the Cytoplasmic side of the membrane. A helical transmembrane segment spans residues 2245 to 2265 (YFLLTLCSLAGLVAANEMGFL). At 2266–2299 (EKTKADLSTVLWSEREEPRPWSEWTNVDIQPARS) the chain is on the lumenal side. Positions 2300-2320 (WGTYVLVVSLFTPYIIHQLQT) form an intramembrane region, helical. Residues 2321-2343 (KIQQLVNSAVASGAQAMRDLGGG) lie on the Lumenal side of the membrane. An intramembrane region (helical) is located at residues 2344 to 2364 (APFFGVAGHVMTLGVVSLIGA). The Lumenal portion of the chain corresponds to 2365–2368 (TPTS). A helical membrane pass occupies residues 2369-2389 (LMVGVGLAALHLAIVVSGLEA). Residues 2390 to 2432 (ELTQRAHKVFFSAMVRNPMVDGDVINPFGEGEAKPALYERRMS) lie on the Cytoplasmic side of the membrane. Residues 2433-2453 (LVLAIVLCLMSVVMNRTVASI) traverse the membrane as a helical segment. Topologically, residues 2454–2477 (TEASAVGLAAAGQLLRPEADTLWT) are lumenal. The helical transmembrane segment at 2478-2498 (MPVACGMSGVVRGSLWGFLPL) threads the bilayer. Topologically, residues 2499–3414 (GHRLWLRASG…WELRLESSII (916 aa)) are cytoplasmic. One can recognise an mRNA cap 0-1 NS5-type MT domain in the interval 2512–2776 (GGSEGDTLGD…ELDLGVGTRC (265 aa)). Ser2567 contributes to the S-adenosyl-L-methionine binding site. Ser2567 is modified (phosphoserine). Lys2572 functions as the For 2'-O-MTase activity in the catalytic mechanism. Gly2597, Trp2598, Thr2615, Ile2616, Asp2642, and Val2643 together coordinate S-adenosyl-L-methionine. The For 2'-O-MTase activity role is filled by Asp2657. Ile2658 lines the S-adenosyl-L-methionine pocket. Active-site for 2'-O-MTase activity residues include Lys2694 and Glu2730. The tract at residues 2730–2734 (EMYYS) is interaction with host SCRIB. An S-adenosyl-L-methionine-binding site is contributed by Tyr2732. Zn(2+) is bound by residues Glu2950, His2954, Cys2959, and Cys2962. Residues 3040 to 3189 (GLFYADDTAG…RPLDDRFGKA (150 aa)) form the RdRp catalytic domain. Zn(2+)-binding residues include His3224, Cys3240, and Cys3359.

The protein in the N-terminal section; belongs to the class I-like SAM-binding methyltransferase superfamily. mRNA cap 0-1 NS5-type methyltransferase family. Homodimer. Interacts (via N-terminus) with host EXOC1 (via C-terminus); this interaction results in EXOC1 degradation through the proteasome degradation pathway. As to quaternary structure, forms heterodimers with envelope protein E in the endoplasmic reticulum and Golgi. In terms of assembly, homodimer; in the endoplasmic reticulum and Golgi. Interacts with protein prM. Interacts with non-structural protein 1. Homodimer; Homohexamer when secreted. Interacts with envelope protein E. As to quaternary structure, interacts (via N-terminus) with serine protease NS3. In terms of assembly, forms a heterodimer with serine protease NS3. May form homooligomers. Forms a heterodimer with NS2B. Interacts with NS4B. Interacts with unphosphorylated RNA-directed RNA polymerase NS5; this interaction stimulates RNA-directed RNA polymerase NS5 guanylyltransferase activity. As to quaternary structure, interacts with serine protease NS3. In terms of assembly, homodimer. Interacts with host STAT2; this interaction inhibits the phosphorylation of the latter, and, when all viral proteins are present (polyprotein), targets STAT2 for degradation. Interacts with serine protease NS3. Interacts with host SCRIB; this interaction targets NS5 to the cell membrane periphery and nucleus, thereby allowing efficient host nuclear STAT1 inhibition. Post-translationally, specific enzymatic cleavages in vivo yield mature proteins. Cleavages in the lumen of endoplasmic reticulum are performed by host signal peptidase, whereas cleavages in the cytoplasmic side are performed by serine protease NS3. Signal cleavage at the 2K-4B site requires a prior NS3 protease-mediated cleavage at the 4A-2K site. In terms of processing, cleaved in post-Golgi vesicles by a host furin, releasing the mature small envelope protein M, and peptide pr. This cleavage is incomplete as up to 30% of viral particles still carry uncleaved prM. N-glycosylated. Post-translationally, N-glycosylated. The excreted form is glycosylated and this is required for efficient secretion of the protein from infected cells. In terms of processing, acetylated by host KAT5. Acetylation modulates NS3 RNA-binding and unwinding activities and plays an important positive role for viral replication. Phosphorylated on serines residues. This phosphorylation may trigger NS5 nuclear localization.

The protein resides in the virion. It localises to the host nucleus. The protein localises to the host cytoplasm. It is found in the host perinuclear region. Its subcellular location is the secreted. The protein resides in the virion membrane. It localises to the host endoplasmic reticulum membrane. The catalysed reaction is Selective hydrolysis of -Xaa-Xaa-|-Yaa- bonds in which each of the Xaa can be either Arg or Lys and Yaa can be either Ser or Ala.. It carries out the reaction RNA(n) + a ribonucleoside 5'-triphosphate = RNA(n+1) + diphosphate. It catalyses the reaction a ribonucleoside 5'-triphosphate + H2O = a ribonucleoside 5'-diphosphate + phosphate + H(+). The enzyme catalyses ATP + H2O = ADP + phosphate + H(+). The catalysed reaction is a 5'-end (5'-triphosphoguanosine)-ribonucleoside in mRNA + S-adenosyl-L-methionine = a 5'-end (N(7)-methyl 5'-triphosphoguanosine)-ribonucleoside in mRNA + S-adenosyl-L-homocysteine. It carries out the reaction a 5'-end (N(7)-methyl 5'-triphosphoguanosine)-ribonucleoside in mRNA + S-adenosyl-L-methionine = a 5'-end (N(7)-methyl 5'-triphosphoguanosine)-(2'-O-methyl-ribonucleoside) in mRNA + S-adenosyl-L-homocysteine + H(+). Its function is as follows. Plays a role in virus budding by binding to the cell membrane and gathering the viral RNA into a nucleocapsid that forms the core of a mature virus particle. During virus entry, may induce genome penetration into the host cytoplasm after hemifusion induced by the surface proteins. Can migrate to the cell nucleus where it modulates host functions. Inhibits RNA silencing by interfering with host Dicer. In terms of biological role, prevents premature fusion activity of envelope proteins in trans-Golgi by binding to envelope protein E at pH6.0. After virion release in extracellular space, gets dissociated from E dimers. Functionally, acts as a chaperone for envelope protein E during intracellular virion assembly by masking and inactivating envelope protein E fusion peptide. prM is the only viral peptide matured by host furin in the trans-Golgi network probably to avoid catastrophic activation of the viral fusion activity in acidic Golgi compartment prior to virion release. prM-E cleavage is inefficient, and many virions are only partially matured. These uncleaved prM would play a role in immune evasion. Its function is as follows. May play a role in virus budding. Exerts cytotoxic effects by activating a mitochondrial apoptotic pathway through M ectodomain. May display a viroporin activity. Binds to host cell surface receptor and mediates fusion between viral and cellular membranes. Envelope protein is synthesized in the endoplasmic reticulum in the form of heterodimer with protein prM. They play a role in virion budding in the ER, and the newly formed immature particle is covered with 60 spikes composed of heterodimer between precursor prM and envelope protein E. The virion is transported to the Golgi apparatus where the low pH causes dissociation of PrM-E heterodimers and formation of E homodimers. prM-E cleavage is inefficient, and many virions are only partially matured. These uncleaved prM would play a role in immune evasion. In terms of biological role, involved in immune evasion, pathogenesis and viral replication. Once cleaved off the polyprotein, is targeted to three destinations: the viral replication cycle, the plasma membrane and the extracellular compartment. Essential for viral replication. Required for formation of the replication complex and recruitment of other non-structural proteins to the ER-derived membrane structures. Excreted as a hexameric lipoparticle that plays a role against host immune response. Antagonizing the complement function. Binds to the host macrophages and dendritic cells. Inhibits signal transduction originating from Toll-like receptor 3 (TLR3). Functionally, component of the viral RNA replication complex that functions in virion assembly and antagonizes the host immune response. Its function is as follows. Required cofactor for the serine protease function of NS3. May have membrane-destabilizing activity and form viroporins. Displays three enzymatic activities: serine protease, NTPase and RNA helicase. NS3 serine protease, in association with NS2B, performs its autocleavage and cleaves the polyprotein at dibasic sites in the cytoplasm: C-prM, NS2A-NS2B, NS2B-NS3, NS3-NS4A, NS4A-2K and NS4B-NS5. NS3 RNA helicase binds RNA and unwinds dsRNA in the 3' to 5' direction. In terms of biological role, regulates the ATPase activity of the NS3 helicase activity. NS4A allows NS3 helicase to conserve energy during unwinding. Functionally, functions as a signal peptide for NS4B and is required for the interferon antagonism activity of the latter. Its function is as follows. Induces the formation of ER-derived membrane vesicles where the viral replication takes place. Inhibits interferon (IFN)-induced host STAT1 phosphorylation and nuclear translocation, thereby preventing the establishment of cellular antiviral state by blocking the IFN-alpha/beta pathway. Inhibits STAT2 translocation in the nucleus after IFN-alpha treatment. Replicates the viral (+) and (-) genome, and performs the capping of genomes in the cytoplasm. NS5 methylates viral RNA cap at guanine N-7 and ribose 2'-O positions. Besides its role in genome replication, also prevents the establishment of cellular antiviral state by blocking the interferon-alpha/beta (IFN-alpha/beta) signaling pathway. Inhibits host TYK2 and STAT2 phosphorylation, thereby preventing activation of JAK-STAT signaling pathway. This is Genome polyprotein from Tick-borne encephalitis virus (strain Hypr) (TBEV).